Reading from the N-terminus, the 311-residue chain is Methenyltetrahydromethanopterin cyclohydrolase (311 aa).

It belongs to the MCH family.

The protein localises to the cytoplasm. The enzyme catalyses 5,10-methenyl-5,6,7,8-tetrahydromethanopterin + H2O = N(5)-formyl-5,6,7,8-tetrahydromethanopterin + H(+). Catalyzes the hydrolysis of methenyl-H(4)MPT(+) to 5-formyl-H(4)MPT. In Halobacterium salinarum (strain ATCC 29341 / DSM 671 / R1), this protein is Methenyltetrahydromethanopterin cyclohydrolase.